A 271-amino-acid chain; its full sequence is Short-chain dehydrogenase/reductase SAT3 (271 aa).

3 residues coordinate NADP(+): serine 17, aspartate 40, and asparagine 67. Serine 153 serves as the catalytic Proton donor. NADP(+)-binding residues include tyrosine 168, lysine 172, and serine 203. The Proton acceptor role is filled by tyrosine 168. The active-site Lowers pKa of active site Tyr is the lysine 172.

Belongs to the short-chain dehydrogenases/reductases (SDR) family.

It functions in the pathway mycotoxin biosynthesis. In terms of biological role, short-chain dehydrogenase/reductase; part of the satratoxin SC1 cluster involved in the biosynthesis of satratoxins, trichothecene mycotoxins that are associated with human food poisonings. Satratoxins are suggested to be made by products of multiple gene clusters (SC1, SC2 and SC3) that encode 21 proteins in all, including polyketide synthases, acetyltransferases, and other enzymes expected to modify the trichothecene skeleton. SC1 encodes 10 proteins, SAT1 to SAT10. The largest are SAT8, which encodes a putative polyketide synthase (PKS) with a conventional non-reducing architecture, and SAT10, a putative protein containing four ankyrin repeats and thus may be involved in protein scaffolding. The putative short-chain reductase SAT3 may assist the PKS in some capacity. SAT6 contains a secretory lipase domain and acts probably as a trichothecene esterase. SAT5 encodes a putative acetyltransferase, and so, with SAT6, may affect endogenous protection from toxicity. The probable transcription factor SAT9 may regulate the expression of the SC1 cluster. SC2 encodes proteins SAT11 to SAT16, the largest of which encodes the putative reducing PKS SAT13. SAT11 is a cytochrome P450 monooxygenase, while SAT14 and SAT16 are probable acetyltransferases. The SC2 cluster may be regulated by the transcription factor SAT15. SC3 is a small cluster that encodes 5 proteins, SAT17 to SAT21. SAT21 is a putative MFS-type transporter which may have a role in exporting secondary metabolites. The four other proteins putatively encoded in SC3 include the taurine hydroxylase-like protein SAT17, the O-methyltransferase SAT18, the acetyltransferase SAT19, and the Cys6-type zinc finger SAT20, the latter being probably involved in regulation of SC3 expression. This chain is Short-chain dehydrogenase/reductase SAT3, found in Stachybotrys chartarum (strain CBS 109288 / IBT 7711) (Toxic black mold).